We begin with the raw amino-acid sequence, 465 residues long: Argininosuccinate lyase (465 aa).

This sequence belongs to the lyase 1 family. Argininosuccinate lyase subfamily.

It localises to the cytoplasm. It carries out the reaction 2-(N(omega)-L-arginino)succinate = fumarate + L-arginine. Its pathway is amino-acid biosynthesis; L-arginine biosynthesis; L-arginine from L-ornithine and carbamoyl phosphate: step 3/3. The sequence is that of Argininosuccinate lyase from Clostridium botulinum (strain Eklund 17B / Type B).